The sequence spans 878 residues: Leucine--tRNA ligase (878 aa).

Residues proline 43–histidine 54 carry the 'HIGH' region motif. The 'KMSKS' region motif lies at lysine 634 to alanine 638. Lysine 637 contributes to the ATP binding site.

It belongs to the class-I aminoacyl-tRNA synthetase family.

It is found in the cytoplasm. It catalyses the reaction tRNA(Leu) + L-leucine + ATP = L-leucyl-tRNA(Leu) + AMP + diphosphate. In Treponema pallidum subsp. pallidum (strain SS14), this protein is Leucine--tRNA ligase.